The chain runs to 410 residues: Cytochrome P450(BM-1) (410 aa).

Cys356 is a binding site for heme.

This sequence belongs to the cytochrome P450 family. Heme serves as cofactor.

The protein resides in the cytoplasm. Functionally, cytochromes P450 are a group of heme-thiolate monooxygenases. They oxidize a variety of structurally unrelated compounds, including steroids, fatty acids, and xenobiotics. The sequence is that of Cytochrome P450(BM-1) (cyp106) from Priestia megaterium (strain ATCC 14581 / DSM 32 / CCUG 1817 / JCM 2506 / NBRC 15308 / NCIMB 9376 / NCTC 10342 / NRRL B-14308 / VKM B-512 / Ford 19) (Bacillus megaterium).